A 284-amino-acid chain; its full sequence is Mevalonate kinase (284 aa).

86 to 96 (PIGSGLGSSAA) contributes to the ATP binding site. Aspartate 137 functions as the Proton acceptor in the catalytic mechanism.

It belongs to the GHMP kinase family. Mevalonate kinase subfamily. In terms of assembly, homodimer. Mg(2+) serves as cofactor.

It localises to the cytoplasm. The catalysed reaction is (R)-mevalonate + ATP = (R)-5-phosphomevalonate + ADP + H(+). It participates in isoprenoid biosynthesis; isopentenyl diphosphate biosynthesis via mevalonate pathway; isopentenyl diphosphate from (R)-mevalonate: step 1/3. Catalyzes the phosphorylation of (R)-mevalonate (MVA) to (R)-mevalonate 5-phosphate (MVAP). Functions in the mevalonate (MVA) pathway leading to isopentenyl diphosphate (IPP), a key precursor for the biosynthesis of isoprenoid compounds such as archaeal membrane lipids. In Archaeoglobus fulgidus (strain ATCC 49558 / DSM 4304 / JCM 9628 / NBRC 100126 / VC-16), this protein is Mevalonate kinase.